A 199-amino-acid polypeptide reads, in one-letter code: ATP-dependent Clp protease proteolytic subunit (199 aa).

Ser-102 acts as the Nucleophile in catalysis. His-127 is a catalytic residue.

The protein belongs to the peptidase S14 family. Component of the chloroplastic Clp protease core complex.

Its subcellular location is the plastid. It localises to the chloroplast stroma. The enzyme catalyses Hydrolysis of proteins to small peptides in the presence of ATP and magnesium. alpha-casein is the usual test substrate. In the absence of ATP, only oligopeptides shorter than five residues are hydrolyzed (such as succinyl-Leu-Tyr-|-NHMec, and Leu-Tyr-Leu-|-Tyr-Trp, in which cleavage of the -Tyr-|-Leu- and -Tyr-|-Trp bonds also occurs).. Its function is as follows. Cleaves peptides in various proteins in a process that requires ATP hydrolysis. Has a chymotrypsin-like activity. Plays a major role in the degradation of misfolded proteins. This chain is ATP-dependent Clp protease proteolytic subunit, found in Physcomitrium patens (Spreading-leaved earth moss).